The chain runs to 308 residues: Ava biosynthesis cluster protein O (308 aa).

Its pathway is secondary metabolite biosynthesis. In terms of biological role, part of the cluster that mediates the biosynthesis of a highly modified cyclo-arginine-tryptophan dipeptide (cRW). The first step of the pathway is perfornmed by the arginine-containing cyclodipeptide synthase (RCPDS) avaA that acts as the scaffold-generating enzyme and is responsible for formation of the cyclo-Arg-Trp (cRW) diketopiperazine. AvaB then acts as a multifunctional flavoenzyme that is responsible for generating the cyclo-Arg-formylkynurenine DKP, which can be deformylated by avaC. AvaB then further catalyzes an additional N-oxidation followed by cyclization and dehydration. The next step is an N-acetylation of the guanidine group catalyzed by the arginine N-acetyltransferase avaD. The roles of the additional enzymes identified within the ava cluster still have to be determined. In Aspergillus versicolor, this protein is Ava biosynthesis cluster protein O.